Here is a 421-residue protein sequence, read N- to C-terminus: Forkhead box protein J1 (421 aa).

Disordered regions lie at residues 1–34 (MAESWLRLSGAGPAEEAGPEGGLEEPDALDDSLT) and 48–116 (KAPA…DYAT). The span at 66–80 (PGSAAPGSPLAADPA) shows a compositional bias: low complexity. Residues 90–99 (KPTSSCTSRS) show a composition bias toward polar residues. Residues 120-210 (VKPPYSYATL…YAERLLSGAF (91 aa)) constitute a DNA-binding region (fork-head). The interval 261 to 302 (AGWGAGEGRLGHKRKQPLPKRVAKVPRPPSTLLPTPEEQGEL) is disordered. The segment covering 271–284 (GHKRKQPLPKRVAK) has biased composition (basic residues).

It belongs to the FOXJ1 family. Testis, oviduct, lung and brain cortex.

It is found in the nucleus. In terms of biological role, transcription factor specifically required for the formation of motile cilia. Acts by activating transcription of genes that mediate assembly of motile cilia, such as CFAP157. Binds the DNA consensus sequences 5'-HWDTGTTTGTTTA-3' or 5'-KTTTGTTGTTKTW-3' (where H is not G, W is A or T, D is not C, and K is G or T). Activates the transcription of a variety of ciliary proteins in the developing brain and lung. The sequence is that of Forkhead box protein J1 from Homo sapiens (Human).